The primary structure comprises 239 residues: Small ribosomal subunit protein uS2 (239 aa).

The protein belongs to the universal ribosomal protein uS2 family.

The sequence is that of Small ribosomal subunit protein uS2 from Prochlorococcus marinus (strain MIT 9313).